A 587-amino-acid chain; its full sequence is uncharacterized protein (587 aa).

A signal peptide spans 1–21 (MANRLLIYGLILWVSIIGSFA). Over 22 to 541 (LDRNKTAQNA…LEKEVSFQRR (520 aa)) the chain is Lumenal. Asparagine 25 is a glycosylation site (N-linked (GlcNAc...) asparagine). The disordered stretch occupies residues 44 to 108 (GSTTNVQKEH…RNPGDSSNSF (65 aa)). Residues 63 to 90 (RTHDFRQASKVDIRQADIRENGERKEQD) are compositionally biased toward basic and acidic residues. Polar residues predominate over residues 91 to 108 (ALTQPATPRNPGDSSNSF). An SUN domain is found at 163 to 331 (NEWSEREENQ…SLIKVYGKSM (169 aa)). 5 N-linked (GlcNAc...) asparagine glycosylation sites follow: asparagine 378, asparagine 381, asparagine 408, asparagine 448, and asparagine 486. A helical membrane pass occupies residues 542-562 (IVYASFFAFVGLISYLLITRE). Topologically, residues 563–587 (LYFEDFEESKNGAIEKADIVQQAIR) are cytoplasmic.

This sequence belongs to the SLP1 family. As to quaternary structure, interacts with EMP65.

The protein localises to the endoplasmic reticulum membrane. May be involved in membrane protein folding. Required for localization of MPS3 to the nuclear envelope. This is an uncharacterized protein from Saccharomyces cerevisiae (strain ATCC 204508 / S288c) (Baker's yeast).